The sequence spans 217 residues: Small ribosomal subunit protein uS3c (217 aa).

Positions 39 to 109 (IRSCIEKQLH…QIRINLIEIT (71 aa)) constitute a KH type-2 domain.

Belongs to the universal ribosomal protein uS3 family. As to quaternary structure, part of the 30S ribosomal subunit.

The protein resides in the plastid. It localises to the chloroplast. The sequence is that of Small ribosomal subunit protein uS3c (rps3) from Gracilaria tenuistipitata var. liui (Red alga).